The following is a 556-amino-acid chain: Insulin-like growth factor 2 mRNA-binding protein 2 (556 aa).

RRM domains follow at residues asparagine 3–serine 76 and arginine 82–aspartate 157. Serine 11 carries the phosphoserine modification. The tract at residues proline 156 to glutamine 188 is disordered. Residues serine 162 and serine 164 each carry the phosphoserine modification. The span at glutamine 170 to glycine 180 shows a compositional bias: basic and acidic residues. 4 consecutive KH domains span residues aspartate 193–isoleucine 258, glutamate 274–isoleucine 341, glutamine 384–isoleucine 449, and lysine 466–isoleucine 532. The residue at position 507 (threonine 507) is a Phosphothreonine.

It belongs to the RRM IMP/VICKZ family. As to quaternary structure, can form homooligomers and heterooligomers with IGF2BP1 and IGF2BP3 in an RNA-dependent manner. Interacts with HNRPD. Interacts with IGF2BP1. Interacts with ELAVL1, DHX9, HNRNPU, MATR3 and PABPC1.

The protein resides in the nucleus. It localises to the cytoplasm. It is found in the P-body. The protein localises to the stress granule. Functionally, RNA-binding factor that recruits target transcripts to cytoplasmic protein-RNA complexes (mRNPs). This transcript 'caging' into mRNPs allows mRNA transport and transient storage. It also modulates the rate and location at which target transcripts encounter the translational apparatus and shields them from endonuclease attacks or microRNA-mediated degradation. Preferentially binds to N6-methyladenosine (m6A)-containing mRNAs and increases their stability. Binds to the 5'-UTR of the insulin-like growth factor 2 (IGF2) mRNAs. Binding is isoform-specific. Binds to beta-actin/ACTB and MYC transcripts. Increases MYC mRNA stability by binding to the coding region instability determinant (CRD) and binding is enhanced by m6A-modification of the CRD. The sequence is that of Insulin-like growth factor 2 mRNA-binding protein 2 (IGF2BP2) from Pongo abelii (Sumatran orangutan).